A 460-amino-acid chain; its full sequence is MQGHHQNHHQHLSSSSATSSHGNFMNKDGYDIGEIDPSLFLYLDGQGHHDPPSTAPSPLHHHHTTQNLAMRPPTSTLNIFPSQPMHIEPPPSSTHNTDNTRLVPAAQPSGSTRPASDPSMDLTNHSQFHQPPQGSKSIKKEGNRKGLASSDHDIPKSSDPKTLRRLAQNREAARKSRLRKKAYVQQLESCRIKLTQLEQEIQRARSQGVFFGGSLIGGDQQQGGLPIGPGNISSEAAVFDMEYARWLEEQQRLLNELRVATQEHLSENELRMFVDTCLAHYDHLINLKAMVAKTDVFHLISGAWKTPAERCFLWMGGFRPSEIIKVIVNQIEPLTEQQIVGICGLQQSTQEAEEALSQGLEALNQSLSDSIVSDSLPPASAPLPPHLSNFMSHMSLALNKLSALEGFVLQADNLRHQTIHRLNQLLTTRQEARCLLAVAEYFHRLQALSSLWLARPRQDG.

Positions Met-1–His-11 are enriched in basic residues. Disordered regions lie at residues Met-1 to Gly-29 and Leu-43 to Leu-163. Over residues Leu-12–His-21 the composition is skewed to low complexity. Polar residues-rich tracts occupy residues Thr-65–Pro-81 and Asp-121–Lys-136. The span at Ile-138–Thr-162 shows a compositional bias: basic and acidic residues. One can recognise a bZIP domain in the interval Asp-159–Arg-203. The interval Lys-161 to Lys-181 is basic motif. The short motif at Leu-163–Arg-170 is the Nuclear localization signal element. Positions Leu-187–Ile-201 are leucine-zipper. One can recognise a DOG1 domain in the interval Ala-236 to Arg-455.

This sequence belongs to the bZIP family. In terms of assembly, homodimer. Binds DNA as a dimer. Interacts with floral glutaredoxins GRXC7/ROXY1 and GRXC8/ROXY2 in the nucleus. Interacts with TGA1, TGA2, TGA3, TGA4, TGA5, TGA6, TGA7, TGA9 and PAN. Expressed at low levels in inflorescence apex and flowers.

The protein resides in the nucleus. Functionally, together with TGA9, basic leucine-zipper transcription factor required for anther development, probably via the activation of SPL expression in anthers and via the regulation of genes with functions in early and middle tapetal development. Required for signaling responses to pathogen-associated molecular patterns (PAMPs) such as flg22 that involves chloroplastic reactive oxygen species (ROS) production and subsequent expression of H(2)O(2)-responsive genes. The chain is Transcription factor TGA10 from Arabidopsis thaliana (Mouse-ear cress).